Consider the following 137-residue polypeptide: Large ribosomal subunit protein bL17 (137 aa).

This sequence belongs to the bacterial ribosomal protein bL17 family. Part of the 50S ribosomal subunit. Contacts protein L32.

This chain is Large ribosomal subunit protein bL17, found in Caulobacter vibrioides (strain ATCC 19089 / CIP 103742 / CB 15) (Caulobacter crescentus).